The primary structure comprises 496 residues: Alanine aminotransferase 1 (496 aa).

The residue at position 2 (alanine 2) is an N-acetylalanine. At threonine 22 the chain carries Phosphothreonine. Lysine 314 bears the N6-(pyridoxal phosphate)lysine mark.

The protein belongs to the class-I pyridoxal-phosphate-dependent aminotransferase family. Alanine aminotransferase subfamily. Homodimer. Pyridoxal 5'-phosphate is required as a cofactor.

It is found in the cytoplasm. The enzyme catalyses L-alanine + 2-oxoglutarate = pyruvate + L-glutamate. Its pathway is amino-acid degradation; L-alanine degradation via transaminase pathway; pyruvate from L-alanine: step 1/1. Its function is as follows. Catalyzes the reversible transamination between alanine and 2-oxoglutarate to form pyruvate and glutamate. Participates in cellular nitrogen metabolism and also in liver gluconeogenesis starting with precursors transported from skeletal muscles. This Bos taurus (Bovine) protein is Alanine aminotransferase 1 (GPT).